The following is a 348-amino-acid chain: Heat-inducible transcription repressor HrcA (348 aa).

The protein belongs to the HrcA family.

Functionally, negative regulator of class I heat shock genes (grpE-dnaK-dnaJ and groELS operons). Prevents heat-shock induction of these operons. The polypeptide is Heat-inducible transcription repressor HrcA (Chlorobium chlorochromatii (strain CaD3)).